The sequence spans 754 residues: Nitrate reductase (754 aa).

A signal peptide (tat-type signal) is located at residues 1–31; it reads MKFTRRSFVKASALATAMVAAGCSPQPVAPK. Residues 39 to 95 form the 4Fe-4S Mo/W bis-MGD-type domain; the sequence is ATWYKTVCRYCGVGCGVMVAAKDNRVVAVKGDTENPVNKGLLCVKGYYLDRIMNTEE. [4Fe-4S] cluster is bound by residues Cys46, Cys49, Cys53, and Cys81. Mo-bis(molybdopterin guanine dinucleotide)-binding positions include Lys83, Gln144, Asn169, Cys173, 256–258, Met341, Gln345, Asn451, Lys497, Asp524, 642–651, Asn728, and Lys745; these read GTD and TGRILEHWHT.

The protein belongs to the prokaryotic molybdopterin-containing oxidoreductase family. NasA/NapA/NarB subfamily. Component of the nitrate reductase NapAB complex composed of NapA and NapB. [4Fe-4S] cluster serves as cofactor. It depends on Mo-bis(molybdopterin guanine dinucleotide) as a cofactor. In terms of processing, predicted to be exported by the Tat system. The position of the signal peptide cleavage has not been experimentally proven.

It localises to the secreted. The enzyme catalyses 2 Fe(II)-[cytochrome] + nitrate + 2 H(+) = 2 Fe(III)-[cytochrome] + nitrite + H2O. In terms of biological role, catalytic subunit of the nitrate reductase complex NapAB. Receives electrons from NapB and catalyzes the reduction of nitrate to nitrite. The protein is Nitrate reductase of Symbiobacterium thermophilum (strain DSM 24528 / JCM 14929 / IAM 14863 / T).